The chain runs to 244 residues: Ureidoacrylate amidohydrolase RutB (244 aa).

Catalysis depends on aspartate 38, which acts as the Proton acceptor. Lysine 147 is a catalytic residue. Cysteine 180 serves as the catalytic Nucleophile.

This sequence belongs to the isochorismatase family. RutB subfamily.

The enzyme catalyses (Z)-3-ureidoacrylate + H2O + H(+) = (Z)-3-aminoacrylate + NH4(+) + CO2. The catalysed reaction is (Z)-3-ureidoacrylate + H2O = (Z)-3-aminoacrylate + carbamate + H(+). It carries out the reaction (Z)-2-methylureidoacrylate + H2O + H(+) = (Z)-2-methylaminoacrylate + NH4(+) + CO2. Hydrolyzes ureidoacrylate to form aminoacrylate and carbamate. The carbamate hydrolyzes spontaneously, thereby releasing one of the nitrogen atoms of the pyrimidine ring as ammonia and one of its carbon atoms as CO2. This chain is Ureidoacrylate amidohydrolase RutB, found in Shigella flexneri serotype X (strain 2002017).